The primary structure comprises 331 residues: MKQTVYTASPESQQIHVWSLNHDGSLKLVQVVDVPGQVQPMVVSPDKRYLYVGVRPEFRVLAYRIAPDDGALTFAAESALPGSPTHISTDHQGRFVFVGSYNAGNVSVTRLDDGLPAGVVDVVEGLEGCHSANISPDNRTLWVPALKQDRICLFTLSDDGKLVAQEPAEVTTVEGAGPRHMAFHPNQQYAYCVNELNSSVDVWELKDPHGNIECVQTLDMMPADFSDTRWAADIHITPDGRHLYACDRTASLITVFSVSEDGSVLTKEGFQPTETQPRGFNVDHSGKYLIAAGQKSHHIAVYAIAGEQGLLTEKGRYAVGQGPMWVVVNAY.

The protein belongs to the cycloisomerase 2 family.

It carries out the reaction 6-phospho-D-glucono-1,5-lactone + H2O = 6-phospho-D-gluconate + H(+). The protein operates within carbohydrate degradation; pentose phosphate pathway; D-ribulose 5-phosphate from D-glucose 6-phosphate (oxidative stage): step 2/3. Catalyzes the hydrolysis of 6-phosphogluconolactone to 6-phosphogluconate. This chain is 6-phosphogluconolactonase, found in Citrobacter koseri (strain ATCC BAA-895 / CDC 4225-83 / SGSC4696).